We begin with the raw amino-acid sequence, 475 residues long: MEIOTIC F-BOX protein MOF (475 aa).

The tract at residues 1–58 is disordered; the sequence is MRRERDATQIPENPMEGIPQTAAAAAAAAAAEASEPPRKRARVDGGGGGAGEEEEDRL. The span at 22-33 shows a compositional bias: low complexity; sequence AAAAAAAAAAEA. The 37-residue stretch at 55-91 folds into the F-box domain; sequence EDRLSDLPDCLLEDILAHLGSRQAVQTSVLSRRWRNL.

The protein belongs to the F-box protein family. FBX subfamily. In terms of assembly, part of a SCF (SKP1-CUL1-F-box protein) E3 ubiquitin-protein ligase complex. Interacts (via F-box domain) directly with SKP1. Highly expressed in the stem, leaf and in the anther during meiosis. Weakly expressed in roots and lemma/palea.

The protein resides in the nucleus. It is found in the chromosome. It functions in the pathway protein modification; protein ubiquitination. In terms of biological role, probable component of a SCF (SKP1-CULLIN-F-box protein) E3 ubiquitin-protein ligase complex and may function through the ubiquitin-mediated protein degradation or signaling pathway. Required for male meiotic prophase I progression. Required for telomere bouquet formation, homologous chromosome pairing and for the formation of the synaptonemal complex (SC), which stabilizes initial chromosomal axial associations and promotes crossover formation. Involved in meiotic DNA double-strand break (DSB) end-processing and repair, and is important in the recruitment of DSB repair proteins to the DSB sites. The protein is MEIOTIC F-BOX protein MOF of Oryza sativa subsp. japonica (Rice).